Consider the following 418-residue polypeptide: Tyrosine--tRNA ligase (418 aa).

Y34 contributes to the L-tyrosine binding site. The 'HIGH' region signature appears at 39-48; that stretch reads PTADSLHLGH. Residues Y169 and Q173 each coordinate L-tyrosine. Residues 229–233 carry the 'KMSKS' region motif; sequence KFGKS. Position 232 (K232) interacts with ATP. Residues 352-418 form the S4 RNA-binding domain; sequence NNIVELLVSS…GKKKYFVLTY (67 aa).

Belongs to the class-I aminoacyl-tRNA synthetase family. TyrS type 1 subfamily. As to quaternary structure, homodimer.

It localises to the cytoplasm. It carries out the reaction tRNA(Tyr) + L-tyrosine + ATP = L-tyrosyl-tRNA(Tyr) + AMP + diphosphate + H(+). Its function is as follows. Catalyzes the attachment of tyrosine to tRNA(Tyr) in a two-step reaction: tyrosine is first activated by ATP to form Tyr-AMP and then transferred to the acceptor end of tRNA(Tyr). The chain is Tyrosine--tRNA ligase from Streptococcus pneumoniae serotype 19F (strain G54).